We begin with the raw amino-acid sequence, 551 residues long: MMKMLKKEEMGGYGEVESWWRRWLWSTNHKDIGTLYLYSGVWGGLFGASLSLMIRMQLGHPGAVFLKSDWFYNVVVTTHALMMIFFAVMPILIEAFGNWLIPLLVGGKDMIYPRMNNLSYWLSPNALYLLMLSFSTDKGVGAGWTIYPPLSVYPYHSGPSMDVLIVSLHLAGLSSLVGAINFASTNKNMPVLEMKGERAELYVLSISVTAVLLIISIPVLGGGITMILFDRNFNTTFFDPAGGGDPVLFQHLFWFFGHPEVYILILPAFGVMSKVIMHCSGKEAVFGLIGMVYAMIGIGGLGCMVWAHHMFTVGLNVDTRGYFSTATMVIAVPTGVKVFSWLATMAGSKFKMKPAAYWSTGFLFLFTVGGLTGVLLSSASMDVSLHDTYYVVAHFHYVLSMGAVFGVFCGLNHWLPNFVGVCFNKKWSKAHFMAMFFGVNTTFFPQHFLGLSGMPRRYMDYADIYAHWHWVSSYGSAVSFGSLMYFKFLLWEALVSQRGVVFSGGLCGEMDWAGTRDLYPGSKHVYSQLPFVWTNPYNTCITYIYKKSRNQ.

Residues 34–54 (TLYLYSGVWGGLFGASLSLMI) traverse the membrane as a helical segment. A Ca(2+)-binding site is contributed by Gly62. Residue His79 coordinates Fe(II)-heme a. 6 consecutive transmembrane segments (helical) span residues 81-101 (LMMI…NWLI), 126-146 (ALYL…GWTI), 163-183 (VLIV…INFA), 209-229 (TAVL…MILF), 252-272 (LFWF…FGVM), and 285-305 (VFGL…GCMV). His258 contributes to the Cu cation binding site. Residues 258–262 (HPEVY) constitute a cross-link (1'-histidyl-3'-tyrosine (His-Tyr)). Tyr262 contacts O2. Cu cation contacts are provided by His308 and His309. A run of 2 helical transmembrane segments spans residues 326 to 346 (ATMV…ATMA) and 356 to 376 (AYWS…GVLL). His386 and Asp387 together coordinate Mg(2+). 3 helical membrane passes run 391–411 (VVAH…FCGL), 432–452 (FMAM…LGLS), and 475–495 (GSAV…EALV). A heme a3-binding site is contributed by His394. A Fe(II)-heme a-binding site is contributed by His396.

The protein belongs to the heme-copper respiratory oxidase family. As to quaternary structure, component of the cytochrome c oxidase (complex IV, CIV), a multisubunit enzyme composed of a catalytic core of 3 subunits and several supernumerary subunits. The complex exists as a monomer or a dimer and forms supercomplexes (SCs) in the inner mitochondrial membrane with ubiquinol-cytochrome c oxidoreductase (cytochrome b-c1 complex, complex III, CIII). Requires heme as cofactor. It depends on Cu cation as a cofactor.

Its subcellular location is the mitochondrion inner membrane. It carries out the reaction 4 Fe(II)-[cytochrome c] + O2 + 8 H(+)(in) = 4 Fe(III)-[cytochrome c] + 2 H2O + 4 H(+)(out). Its pathway is energy metabolism; oxidative phosphorylation. Functionally, component of the cytochrome c oxidase, the last enzyme in the mitochondrial electron transport chain which drives oxidative phosphorylation. The respiratory chain contains 3 multisubunit complexes succinate dehydrogenase (complex II, CII), ubiquinol-cytochrome c oxidoreductase (cytochrome b-c1 complex, complex III, CIII) and cytochrome c oxidase (complex IV, CIV), that cooperate to transfer electrons derived from NADH and succinate to molecular oxygen, creating an electrochemical gradient over the inner membrane that drives transmembrane transport and the ATP synthase. Cytochrome c oxidase is the component of the respiratory chain that catalyzes the reduction of oxygen to water. Electrons originating from reduced cytochrome c in the intermembrane space (IMS) are transferred via the dinuclear copper A center (CU(A)) of subunit 2 and heme A of subunit 1 to the active site in subunit 1, a binuclear center (BNC) formed by heme A3 and copper B (CU(B)). The BNC reduces molecular oxygen to 2 water molecules using 4 electrons from cytochrome c in the IMS and 4 protons from the mitochondrial matrix. The polypeptide is Cytochrome c oxidase subunit 1 (COI) (Mytilus edulis (Blue mussel)).